A 75-amino-acid polypeptide reads, in one-letter code: Exodeoxyribonuclease 7 small subunit (75 aa).

The protein belongs to the XseB family. In terms of assembly, heterooligomer composed of large and small subunits.

The protein resides in the cytoplasm. The enzyme catalyses Exonucleolytic cleavage in either 5'- to 3'- or 3'- to 5'-direction to yield nucleoside 5'-phosphates.. Bidirectionally degrades single-stranded DNA into large acid-insoluble oligonucleotides, which are then degraded further into small acid-soluble oligonucleotides. The protein is Exodeoxyribonuclease 7 small subunit of Clostridium perfringens (strain ATCC 13124 / DSM 756 / JCM 1290 / NCIMB 6125 / NCTC 8237 / Type A).